A 306-amino-acid polypeptide reads, in one-letter code: MSTLGHQYDNSLVSNAFGFLRLPMNFQPYDSDADWVITGVPFDMATSGRAGGRHGPAAIRQVSTNLAWEHHRFPWNFDMRERLNVVDCGDLVYAFGDAREMSEKLQAHAEKLLSAGKRMLSFGGDHFVTLPLLRAHAKHFGKMALVHFDAHTDTYANGCEFDHGTMFYTAPKEGLIDPHHSVQIGIRTEFDKDNGFTVLDACQVNDRGVDDILAQVKQIVGDMPVYLTFDIDCLDPAFAPGTGTPVIGGLTSDRAIKLVRGLKDLNIVGMDVVEVAPAYDQSEITALAAATLALEMLYIQAAKKGE.

Mn(2+) contacts are provided by histidine 126, aspartate 149, histidine 151, aspartate 153, aspartate 230, and aspartate 232.

The protein belongs to the arginase family. Agmatinase subfamily. Mn(2+) serves as cofactor.

The enzyme catalyses agmatine + H2O = urea + putrescine. The protein operates within amine and polyamine biosynthesis; putrescine biosynthesis via agmatine pathway; putrescine from agmatine: step 1/1. Catalyzes the formation of putrescine from agmatine. This is Agmatinase from Salmonella agona (strain SL483).